The sequence spans 1101 residues: Protein unc-13 homolog (1101 aa).

The MHD1 domain maps to 663 to 804; that stretch reads VSVFPAADSL…ASKDDLVPPV (142 aa). Residues 941–1051 enclose the MHD2 domain; sequence QSRLEGLIEA…YETRELIDDL (111 aa).

It belongs to the unc-13 family. In terms of tissue distribution, expressed in roots, cotyledons, leaves, stems and flowers. Expressed in guard cells and mesophyll cells of leaves.

It is found in the cytoplasm. It localises to the cell membrane. Its function is as follows. Controls the tethering of the proton ATPase AHA1 to the plasma membrane. Is essential for stomatal opening in response to low concentration of carbon dioxide and light. The chain is Protein unc-13 homolog from Arabidopsis thaliana (Mouse-ear cress).